The following is a 616-amino-acid chain: Dihydroxy-acid dehydratase (616 aa).

Aspartate 81 contributes to the Mg(2+) binding site. A [2Fe-2S] cluster-binding site is contributed by cysteine 122. Positions 123 and 124 each coordinate Mg(2+). The residue at position 124 (lysine 124) is an N6-carboxylysine. Cysteine 195 lines the [2Fe-2S] cluster pocket. Residue glutamate 491 coordinates Mg(2+). Serine 517 functions as the Proton acceptor in the catalytic mechanism.

Belongs to the IlvD/Edd family. As to quaternary structure, homodimer. Requires [2Fe-2S] cluster as cofactor. Mg(2+) serves as cofactor.

The enzyme catalyses (2R)-2,3-dihydroxy-3-methylbutanoate = 3-methyl-2-oxobutanoate + H2O. It catalyses the reaction (2R,3R)-2,3-dihydroxy-3-methylpentanoate = (S)-3-methyl-2-oxopentanoate + H2O. The protein operates within amino-acid biosynthesis; L-isoleucine biosynthesis; L-isoleucine from 2-oxobutanoate: step 3/4. Its pathway is amino-acid biosynthesis; L-valine biosynthesis; L-valine from pyruvate: step 3/4. Functions in the biosynthesis of branched-chain amino acids. Catalyzes the dehydration of (2R,3R)-2,3-dihydroxy-3-methylpentanoate (2,3-dihydroxy-3-methylvalerate) into 2-oxo-3-methylpentanoate (2-oxo-3-methylvalerate) and of (2R)-2,3-dihydroxy-3-methylbutanoate (2,3-dihydroxyisovalerate) into 2-oxo-3-methylbutanoate (2-oxoisovalerate), the penultimate precursor to L-isoleucine and L-valine, respectively. The protein is Dihydroxy-acid dehydratase of Sodalis glossinidius (strain morsitans).